The chain runs to 898 residues: Histone-lysine N-methyltransferase mes-4 (898 aa).

The tract at residues 1 to 68 (MLPSSGDSSK…APILTNAPKD (68 aa)) is disordered. Positions 36–51 (QRNATPQGAGSETSSN) are enriched in polar residues. PHD-type zinc fingers lie at residues 126-214 (DSKC…CNLD) and 303-355 (IKAC…CVCG). The SET domain maps to 537-665 (EKIKLAATLC…DGDEITFSYN (129 aa)). The Post-SET domain maps to 671–687 (NLPDCECGAENCMGTMG). Positions 689-847 (AKREKPEVAD…SLQTIQETGK (159 aa)) are disordered. Positions 692 to 704 (EKPEVADSSEKAA) are enriched in basic and acidic residues. The segment covering 705–719 (KKNKSSKKKSVKNQN) has biased composition (basic residues). Low complexity-rich tracts occupy residues 737-751 (ISPS…SSTS) and 761-773 (SQNK…NSNQ). Positions 774 to 788 (PVADTGSTLSTSTEL) are enriched in polar residues. A compositionally biased stretch (low complexity) spans 802–811 (SSRSRAASSS).

Belongs to the class V-like SAM-binding methyltransferase superfamily. Histone-lysine methyltransferase family. SET2 subfamily. In adults, it is predominantly expressed in the germline, and weakly expressed in intestinal cells.

The protein resides in the nucleus. Its subcellular location is the chromosome. The enzyme catalyses L-lysyl(36)-[histone H3] + 2 S-adenosyl-L-methionine = N(6),N(6)-dimethyl-L-lysyl(36)-[histone H3] + 2 S-adenosyl-L-homocysteine + 2 H(+). Its function is as follows. Histone methyltransferase. Dimethylates 'Lys-36' of histone H3, a specific tag for epigenetic transcriptional activation. Plays a central role in early development and is responsible for all H3 'Lys-36' dimethylation until about the 40-cell stage. Indirectly involved in the global inactivation of the X chromosomes in germline cells, possibly by excluding the mes-2-mes-3-mes-6 repressive Polycomb complex from the autosomes. Not related to transcription elongation. Required for small-RNA-induced H3K27 trimethylation. May suppress sensitivity to RNAi. May regulate the expression of genes required for vulval development. The chain is Histone-lysine N-methyltransferase mes-4 from Caenorhabditis elegans.